Reading from the N-terminus, the 273-residue chain is Large ribosomal subunit protein uL2 (273 aa).

Disordered stretches follow at residues 28 to 53 (KPFA…TTRH) and 221 to 273 (RGTA…RRSK). The segment covering 39–48 (KSGGRNNNGR) has biased composition (low complexity).

It belongs to the universal ribosomal protein uL2 family. In terms of assembly, part of the 50S ribosomal subunit. Forms a bridge to the 30S subunit in the 70S ribosome.

Its function is as follows. One of the primary rRNA binding proteins. Required for association of the 30S and 50S subunits to form the 70S ribosome, for tRNA binding and peptide bond formation. It has been suggested to have peptidyltransferase activity; this is somewhat controversial. Makes several contacts with the 16S rRNA in the 70S ribosome. The chain is Large ribosomal subunit protein uL2 from Enterobacter sp. (strain 638).